The chain runs to 92 residues: MARSIWKGPFVDGYLIKKVQKLMKSGKSEMIKTWSRRSTILPIFVGFTFSVHNGNKFIPVYINEEMVGRKLGEFAPTRTFHGHGADKKVKRK.

Belongs to the universal ribosomal protein uS19 family.

Its function is as follows. Protein S19 forms a complex with S13 that binds strongly to the 16S ribosomal RNA. This Rickettsia prowazekii (strain Madrid E) protein is Small ribosomal subunit protein uS19 (rpsS).